The primary structure comprises 274 residues: Thiamine kinase (274 aa).

The protein belongs to the thiamine kinase family.

The catalysed reaction is thiamine + ATP = thiamine phosphate + ADP + H(+). Its pathway is cofactor biosynthesis; thiamine diphosphate biosynthesis; thiamine phosphate from thiamine: step 1/1. In terms of biological role, catalyzes the ATP-dependent phosphorylation of thiamine to thiamine phosphate. Is involved in thiamine salvage. In Salmonella paratyphi A (strain ATCC 9150 / SARB42), this protein is Thiamine kinase.